The following is a 403-amino-acid chain: MDFNVKKLASDAGVFFSRAMQFTEEKLGQAEKTELDAHFENLLARADSTKNWTEKILRQTEVLLQPNPSARVEEFLYEKLDRKVPSRVTNGELLAQYMTEAANDFGPGTPYGKTLIKVGETQRRLGAAERDFIHSASINFLTPLRNFLEGDWRTISKERRILQNRRLDLDACKARLKKAKAAEAKAAAVPDFQETRPRNYVLSASASALWSDEVEKAEHELRLTQTEFDRQAEVTRLLLEGISSTHVNHLRCLHEFVESQTNYYAQCYQYMLDLQKQLGRFSGTFVGNAESTSPPPAAASPPAVAATTLPAVPTIPVVPTIVGVPNTVAESVLNPNEVKPPASGTRKARVLYDYEAADSTELALLADEMITVYSLPGMDPDWLIGERGNQKGKVPVTYLELLS.

Positions 1 to 27 (MDFNVKKLASDAGVFFSRAMQFTEEKL) are membrane-binding amphipathic helix. Positions 24-287 (EEKLGQAEKT…LGRFSGTFVG (264 aa)) constitute a BAR domain. Residues 210–233 (WSDEVEKAEHELRLTQTEFDRQAE) are a coiled coil. In terms of domain architecture, SH3 spans 343–403 (SGTRKARVLY…VPVTYLELLS (61 aa)).

The protein belongs to the endophilin family. As to quaternary structure, homodimer, and heterodimer with SH3GLB1.

It is found in the cytoplasm. In Gallus gallus (Chicken), this protein is Endophilin-B2.